Here is a 140-residue protein sequence, read N- to C-terminus: Thioredoxin M-type, chloroplastic (140 aa).

The N-terminal 34 residues, 1–34 (MALVARRAAVPSARSSARPAFARAAPRRSVVVRA), are a transit peptide targeting the chloroplast. The Thioredoxin domain maps to 35-140 (EAGAVNDDTF…IVQTVEKYLN (106 aa)). Catalysis depends on nucleophile residues C64 and C67. C64 and C67 are joined by a disulfide.

It belongs to the thioredoxin family. Plant M-type subfamily. In terms of assembly, forms a complex with heterodimeric ferredoxin-thioredoxin reductase (FTR) and ferredoxin.

The protein localises to the plastid. It is found in the chloroplast. Functionally, participates in various redox reactions through the reversible oxidation of the active center dithiol to a disulfide. The M form is known to activate NADP-malate dehydrogenase. This Chlamydomonas reinhardtii (Chlamydomonas smithii) protein is Thioredoxin M-type, chloroplastic (TRXM).